The sequence spans 335 residues: Ornithine carbamoyltransferase (335 aa).

Residues 56–59, glutamine 83, arginine 107, and 134–137 each bind carbamoyl phosphate; these read STRT and HPTQ. L-ornithine contacts are provided by residues asparagine 168, aspartate 232, and 236-237; that span reads SM. Carbamoyl phosphate-binding positions include 274–275 and arginine 320; that span reads CL.

Belongs to the aspartate/ornithine carbamoyltransferase superfamily. OTCase family.

Its subcellular location is the cytoplasm. It carries out the reaction carbamoyl phosphate + L-ornithine = L-citrulline + phosphate + H(+). Its pathway is amino-acid biosynthesis; L-arginine biosynthesis; L-arginine from L-ornithine and carbamoyl phosphate: step 1/3. In terms of biological role, reversibly catalyzes the transfer of the carbamoyl group from carbamoyl phosphate (CP) to the N(epsilon) atom of ornithine (ORN) to produce L-citrulline. The protein is Ornithine carbamoyltransferase of Yersinia pestis bv. Antiqua (strain Nepal516).